The sequence spans 62 residues: Pro-MCH variant (62 aa).

The tract at residues 23-41 is NGE-like; sequence GSVAFPAENGVQDTESTQE. The interval 28 to 62 is disordered; it reads PAENGVQDTESTQEKRETGDEENSAQFPIGRRDFD. The segment at 44–56 is NEI-like; the sequence is ETGDEENSAQFPI. Residues 60–62 are melanin-concentrating hormone-like; sequence DFD.

It belongs to the melanin-concentrating hormone family.

The sequence is that of Pro-MCH variant (PMCHL1) from Hylobates lar (Lar gibbon).